The chain runs to 366 residues: L-tyrosine C(3)-methyltransferase (366 aa).

The segment covering 1–12 (MTISLENTTVGQ) has biased composition (polar residues). The tract at residues 1 to 22 (MTISLENTTVGQNPAGGPPTGK) is disordered. Glu223 lines the S-adenosyl-L-methionine pocket.

The protein belongs to the class I-like SAM-binding methyltransferase superfamily. Cation-independent O-methyltransferase family.

The catalysed reaction is L-tyrosine + S-adenosyl-L-methionine = 3-methyl-L-tyrosine + S-adenosyl-L-homocysteine + H(+). The protein operates within antibiotic biosynthesis. In terms of biological role, C-methyltransferase that mediates the methylation of tyrosine into 3-methyl-L-tyrosine (3-Me-Tyr) in biosynthesis of saframycin A, a potent antitumor antibiotic that belongs to the tetrahydroisoquinoline family. Involved in biosynthesis of 3-hydroxy-5-methyl-O-methyltyrosine (3-OH-5-Me-OMe-Tyr), a core structure of saframycin A. This Streptomyces lavendulae protein is L-tyrosine C(3)-methyltransferase.